The primary structure comprises 1122 residues: Phytochrome A (1122 aa).

Polar residues predominate over residues 1–11; it reads MSGSRPTQSSE. A disordered region spans residues 1–21; it reads MSGSRPTQSSEGSRRSRHSAR. The 185-residue stretch at 218–402 folds into the GAF domain; it reads SMERLCDTMV…VFAIHVNKEV (185 aa). Cys-323 lines the phytochromobilin pocket. The region spanning 618–688 is the PAS 1 domain; it reads VTSEMVRLIE…RMLENALEGT (71 aa). Residues 695–747 form the PAC domain; it reads FEIKTHLSRADAGPISLVVNACASRDLHENVVGVCFVAHDLTGQKTVMDKFTR. Residues 748–822 enclose the PAS 2 domain; sequence IEGDYKAIIQ…KNQEAFVNLG (75 aa). The region spanning 902-1119 is the Histidine kinase domain; it reads YIKRQIRNPL…SFIITAELAA (218 aa).

It belongs to the phytochrome family. Homodimer. Interacts with NDPK2 and PKS4. Stabilized by interactions with PAPP5 and FYPP3 which are enhanced in the phosphorylated Pfr form. Interacts with COP1/SPA1 complex. Binds, via its photosensory domain, to PTAC12/HMR when photoactivated; this interaction stimulates its localization to photobodies. Interacts with FHY1, FHL and FHY3, especially upon far-red (FR) light illumination; when underphosphorylated. Forms PHYA/FHY1/HFR1 complex. Binds to PIF3/PAP3. Post-translationally, phosphorylated. In terms of processing, contains one covalently linked phytochromobilin chromophore. Expressed in fruits, flowers, leaves, stems, seedlings and roots.

The protein resides in the cytoplasm. It is found in the nucleus. It localises to the nucleoplasm. Its subcellular location is the nucleus speckle. Regulatory photoreceptor which exists in two forms that are reversibly interconvertible by light: the Pr form that absorbs maximally in the red region of the spectrum and the Pfr form that absorbs maximally in the far-red region. Photoconversion of Pr to Pfr induces an array of morphogenetic responses, whereas reconversion of Pfr to Pr cancels the induction of those responses. Pfr controls the expression of a number of nuclear genes including those encoding the small subunit of ribulose-bisphosphate carboxylase, chlorophyll A/B binding protein, protochlorophyllide reductase, rRNA, etc. It also controls the expression of its own gene(s) in a negative feedback fashion. Involved in the flowering time regulation. Can phosphorylate FHY1 and, possibly, FHL, in red light conditions; this inactivates their co-shuttling to the nucleus. Regulates phototropic responses both in the nucleus (e.g. hypocotyl elongation and cotyledon opening under high-irradiance conditions and seed germination under very-low-fluence conditions) and in the cytoplasm (e.g. negative gravitropism in blue light and red-enhanced phototropism). Promotes seed germination, suppression of hypocotyl elongation, and randomization of hypocotyl growth orientation in far-red light; these responses to far-red light are repressed by UNE10/PIF8. Stabilizes UNE10/PIF8 but sequesters PIF3/PAP3 from its target genes promoters in far-red light. The polypeptide is Phytochrome A (Arabidopsis thaliana (Mouse-ear cress)).